The following is a 206-amino-acid chain: Threonine efflux protein (206 aa).

A helical transmembrane segment spans residues 1-21; sequence MMMLFFTVAMVHIVALMSPGP. Residues 22-43 lie on the Periplasmic side of the membrane; it reads DFFFVSQTAVSRSRKEAMMGVL. Residues 44–64 form a helical membrane-spanning segment; that stretch reads GITCGVMVWAGVALLGLHLII. The Cytoplasmic segment spans residues 65-66; sequence EK. The helical transmembrane segment at 67-87 threads the bilayer; sequence MAWLHTIIMVGGGLYLCWMGY. Residues 88 to 149 lie on the Periplasmic side of the membrane; the sequence is QMLRGALKKQ…VGDNVGAAAR (62 aa). A helical membrane pass occupies residues 150-173; it reads WGIFALITLETLAWFTVVASLFAL. The Cytoplasmic segment spans residues 174–206; that stretch reads PKMRRGYQRLAKWIDGFAGALFAGFGIHLIISR.

Belongs to the Rht family.

The protein localises to the cell inner membrane. Functionally, conducts the efflux of threonine. The chain is Threonine efflux protein (rhtC) from Salmonella typhimurium (strain LT2 / SGSC1412 / ATCC 700720).